The chain runs to 248 residues: DNA polymerase sliding clamp 2 (248 aa).

The protein belongs to the PCNA family. In terms of assembly, the subunits circularize to form a toroid; DNA passes through its center. Replication factor C (RFC) is required to load the toroid on the DNA. Forms a dimeric complex with PCNA3 and trimeric complexes PCNA123 and PCNA323; does not form homotrimers. Crystal structures show a heterotetramer of 2 PCNA2 and 2 PCNA3, which would be large enough to clamp a Holliday junction.

Functionally, sliding clamp subunit that acts as a moving platform for DNA processing. Responsible for tethering the catalytic subunit of DNA polymerase and other proteins to DNA during high-speed replication. Both trimeric complexes inhibit DNA ligase and both 3'-5' and 5'-3' activity of Hel308 (Hjm) helicase, but stimulate Hjc, the Holliday junction cleavage enzyme. The protein is DNA polymerase sliding clamp 2 of Sulfurisphaera tokodaii (strain DSM 16993 / JCM 10545 / NBRC 100140 / 7) (Sulfolobus tokodaii).